A 331-amino-acid polypeptide reads, in one-letter code: Phosphate acyltransferase (331 aa).

This sequence belongs to the PlsX family. As to quaternary structure, homodimer. Probably interacts with PlsY.

It is found in the cytoplasm. The catalysed reaction is a fatty acyl-[ACP] + phosphate = an acyl phosphate + holo-[ACP]. It participates in lipid metabolism; phospholipid metabolism. Its function is as follows. Catalyzes the reversible formation of acyl-phosphate (acyl-PO(4)) from acyl-[acyl-carrier-protein] (acyl-ACP). This enzyme utilizes acyl-ACP as fatty acyl donor, but not acyl-CoA. This chain is Phosphate acyltransferase, found in Chlorobaculum tepidum (strain ATCC 49652 / DSM 12025 / NBRC 103806 / TLS) (Chlorobium tepidum).